Reading from the N-terminus, the 153-residue chain is NAD(P)H-quinone oxidoreductase subunit N (153 aa).

This sequence belongs to the complex I NdhN subunit family. NDH-1 can be composed of about 15 different subunits; different subcomplexes with different compositions have been identified which probably have different functions.

The protein localises to the cellular thylakoid membrane. It catalyses the reaction a plastoquinone + NADH + (n+1) H(+)(in) = a plastoquinol + NAD(+) + n H(+)(out). It carries out the reaction a plastoquinone + NADPH + (n+1) H(+)(in) = a plastoquinol + NADP(+) + n H(+)(out). Functionally, NDH-1 shuttles electrons from an unknown electron donor, via FMN and iron-sulfur (Fe-S) centers, to quinones in the respiratory and/or the photosynthetic chain. The immediate electron acceptor for the enzyme in this species is believed to be plastoquinone. Couples the redox reaction to proton translocation, and thus conserves the redox energy in a proton gradient. Cyanobacterial NDH-1 also plays a role in inorganic carbon-concentration. This chain is NAD(P)H-quinone oxidoreductase subunit N, found in Synechococcus sp. (strain WH7803).